Reading from the N-terminus, the 607-residue chain is Serum albumin (607 aa).

The N-terminal stretch at 1–16 is a signal peptide; sequence MKWTILTALLIISAES. Positions 17–20 are excised as a propeptide; the sequence is KNLY. 3 Albumin domains span residues 19-209, 210-401, and 403-600; these read LYKR…TQLK, KALH…HVLA, and AIKE…ILIE. Residue His27 participates in Cu cation binding. Intrachain disulfides connect Cys77–Cys86, Cys99–Cys115, Cys114–Cys125, Cys147–Cys192, Cys191–Cys200, Cys223–Cys269, Cys268–Cys276, Cys288–Cys302, Cys301–Cys312, Cys339–Cys384, Cys383–Cys392, Cys415–Cys461, Cys460–Cys471, Cys484–Cys500, Cys499–Cys510, Cys537–Cys582, and Cys581–Cys590. Zn(2+) contacts are provided by His270 and Asp272. Residues Asp272 and Glu275 each coordinate Ca(2+).

This sequence belongs to the ALB/AFP/VDB family. As to expression, plasma. In the skin, widely distributed around the membranes of epithelial layer cells and within the stratum spongiosum of the dermis (at protein level).

The protein localises to the secreted. Functionally, serum albumin, the main protein of plasma, has a good binding capacity for water, Ca(2+), Na(+), K(+), fatty acids, hormones, bilirubin and drugs. Its main function is the regulation of the colloidal osmotic pressure of blood. Potent inhibitor of trypsin but has no inhibitory effect on thrombin, chymotrypsin, elastase and subtilisin. In Bombina maxima (Giant fire-bellied toad), this protein is Serum albumin.